A 63-amino-acid polypeptide reads, in one-letter code: Large ribosomal subunit protein bL28 (63 aa).

This sequence belongs to the bacterial ribosomal protein bL28 family.

The chain is Large ribosomal subunit protein bL28 from Kosmotoga olearia (strain ATCC BAA-1733 / DSM 21960 / TBF 19.5.1).